The sequence spans 469 residues: Ribosomal protein uS12 methylthiotransferase RimO (469 aa).

The MTTase N-terminal domain maps to 1 to 115 (MKFHIITLGC…IGSVVAGGVA (115 aa)). Residues C10, C46, C78, C180, C184, and C187 each coordinate [4Fe-4S] cluster. Residues 166–398 (NKRGPSAYLK…MAVQQVISRA (233 aa)) form the Radical SAM core domain. Positions 401–469 (ARFVGQTMKV…TDYDLWGEIV (69 aa)) constitute a TRAM domain.

This sequence belongs to the methylthiotransferase family. RimO subfamily. [4Fe-4S] cluster serves as cofactor.

Its subcellular location is the cytoplasm. It carries out the reaction L-aspartate(89)-[ribosomal protein uS12]-hydrogen + (sulfur carrier)-SH + AH2 + 2 S-adenosyl-L-methionine = 3-methylsulfanyl-L-aspartate(89)-[ribosomal protein uS12]-hydrogen + (sulfur carrier)-H + 5'-deoxyadenosine + L-methionine + A + S-adenosyl-L-homocysteine + 2 H(+). In terms of biological role, catalyzes the methylthiolation of an aspartic acid residue of ribosomal protein uS12. The protein is Ribosomal protein uS12 methylthiotransferase RimO of Herpetosiphon aurantiacus (strain ATCC 23779 / DSM 785 / 114-95).